A 296-amino-acid chain; its full sequence is Cleavage and polyadenylation specificity factor subunit 4 (296 aa).

C3H1-type zinc fingers lie at residues 35 to 63 (KSIA…RHIR), 64 to 91 (GDRT…HEYD), 92 to 119 (MTKM…HIDP), 120 to 147 (QSKV…HLRR), and 149 to 171 (LCMD…HPHF). Residues 189 to 206 (PTCHYCGELGHKANSCKQ) form a CCHC-type 1 zinc finger. Residues 222-254 (HSGGHSGGYSGHSGHIEGADDMQSNHHSQPHGP) form a disordered region. The CCHC-type 2 zinc finger occupies 266–283 (ITCYKCGNKGHYANKCPK).

In terms of assembly, component of the cleavage and polyadenylation specificity factor (CPSF) complex, composed of at least Clp, Cpsf73, Cpsf100 and Cpsf160. During oogenesis, expression is detected in the germarium, in nurse cells, in the oocyte, and in the somatically derived follicular epithelial cells (at protein level). At oogenesis stage 12, nurse cells degenerate and their content is transferred into the oocyte. In larvae, expressed in all organs and disks (at protein level). In the larval salivary gland, expression is initially confined to cells at the anterior end but later expands throughout the entire gland (at protein level).

It localises to the nucleus. Its function is as follows. Component of the cleavage and polyadenylation specificity factor (CPSF) complex that plays a key role in pre-mRNA 3'-end formation, recognizing the AAUAAA signal sequence and interacting with poly(A) polymerase and other factors to bring about cleavage and poly(A) addition. Has endonuclease activity. Binds RNA polymers with a preference for G- and/or C-rich clusters. Binds single-stranded DNA non-specifically. The polypeptide is Cleavage and polyadenylation specificity factor subunit 4 (Clp) (Drosophila melanogaster (Fruit fly)).